A 567-amino-acid chain; its full sequence is uncharacterized protein (567 aa).

The interval 1–26 (MPSEKATTRHLPGAVETLSPRTGRRP) is disordered. Helical transmembrane passes span 57–77 (AILVTNVIGLIVGAMLLTVAF), 90–110 (VSFGIVPGYCVLAFILGTYWL), 142–162 (VALAVLFLWGAAAALWTIIYG), 173–193 (LFSMGVIGVVAATSCYLLTEF), 221–241 (MLVWLLCSGVPNVGVALTAIF), and 257–277 (VLILWAPLLIFGFILMWILAW). One can recognise an HAMP domain in the interval 278 to 329 (LTATPVRVVREALNRVEQGDLSGDLVVFDGTELGELQRGFNRMVEGLRERER). A Guanylate cyclase domain is found at 361 to 485 (AVVFVDIVGS…EPVNEAARLC (125 aa)).

The protein belongs to the adenylyl cyclase class-3 family.

It localises to the cell membrane. This is an uncharacterized protein from Mycobacterium tuberculosis (strain ATCC 25618 / H37Rv).